Consider the following 413-residue polypeptide: Peptidase T (413 aa).

His-84 contributes to the Zn(2+) binding site. Asp-86 is a catalytic residue. Zn(2+) is bound at residue Asp-147. Glu-181 serves as the catalytic Proton acceptor. Glu-182, Asp-204, and His-386 together coordinate Zn(2+).

This sequence belongs to the peptidase M20B family. Zn(2+) is required as a cofactor.

The protein resides in the cytoplasm. It carries out the reaction Release of the N-terminal residue from a tripeptide.. Cleaves the N-terminal amino acid of tripeptides. The protein is Peptidase T of Ligilactobacillus salivarius (strain UCC118) (Lactobacillus salivarius).